The chain runs to 134 residues: kinetoplast-associated protein 3 (134 aa).

Residues 1 to 10 (MLRRSPTLLR) constitute a propeptide that is removed on maturation. Residues 106 to 124 (PKAPKAAKSASSKVKTAAK) show a composition bias toward low complexity. A disordered region spans residues 106–134 (PKAPKAAKSASSKVKTAAKTAKKTTAARK). Residues 125–134 (TAKKTTAARK) show a composition bias toward basic residues.

Belongs to the KAP family. Associates with the kinetoplast DNA network.

It localises to the mitochondrion matrix. The protein resides in the kinetoplast. Histone H1-like DNA-binding protein involved in the organization and segregation of kinetoplast DNA (kDNA). The mitochondrial DNA of kinetoplastid protozoa consists of about 5,000 minicircles and 20 to 30 maxicircles. These circular DNAs are held together by catenation into a highly organized compact disk structure referred to as a kinetoplast DNA (kDNA) network. Binds preferentially to a specific fragment of minicircle DNA and is able to compact kDNA networks through DNA charge neutralization and condensation. The chain is kinetoplast-associated protein 3 (KAP3) from Crithidia fasciculata.